Consider the following 333-residue polypeptide: Salivary glue protein Sgs-3 (333 aa).

An N-terminal signal peptide occupies residues 1-23; sequence MKLTIATALVGILLIACAHVANG. The tract at residues 51 to 285 is disordered; the sequence is TCRPPTTTRC…ATARPTSKPC (235 aa). A compositionally biased stretch (pro residues) spans 60 to 73; that stretch reads CPPPTTTRCPPPTR. Over residues 74–88 the composition is skewed to low complexity; it reads PAECTATTKRPTARP. Over residues 89–277 the composition is skewed to basic residues; sequence TTKRATTRRT…TKRATTKRAT (189 aa).

In Drosophila erecta (Fruit fly), this protein is Salivary glue protein Sgs-3 (Sgs3).